We begin with the raw amino-acid sequence, 160 residues long: UPF0178 protein PA14_69280 (160 aa).

The protein belongs to the UPF0178 family.

The chain is UPF0178 protein PA14_69280 from Pseudomonas aeruginosa (strain UCBPP-PA14).